The following is a 243-amino-acid chain: 1-(5-phosphoribosyl)-5-[(5-phosphoribosylamino)methylideneamino] imidazole-4-carboxamide isomerase (243 aa).

The active-site Proton acceptor is the D9. D131 (proton donor) is an active-site residue.

Belongs to the HisA/HisF family.

It localises to the cytoplasm. It catalyses the reaction 1-(5-phospho-beta-D-ribosyl)-5-[(5-phospho-beta-D-ribosylamino)methylideneamino]imidazole-4-carboxamide = 5-[(5-phospho-1-deoxy-D-ribulos-1-ylimino)methylamino]-1-(5-phospho-beta-D-ribosyl)imidazole-4-carboxamide. It participates in amino-acid biosynthesis; L-histidine biosynthesis; L-histidine from 5-phospho-alpha-D-ribose 1-diphosphate: step 4/9. The polypeptide is 1-(5-phosphoribosyl)-5-[(5-phosphoribosylamino)methylideneamino] imidazole-4-carboxamide isomerase (Campylobacter jejuni (strain RM1221)).